A 162-amino-acid polypeptide reads, in one-letter code: MAENNRAVIKLKEKFAASILDVREFRGEVTVTVAREKVVDICRFLKESLQYNLCTDVTAVDYLGKQEPRFMVVYNLYSIPNKDRLRLKAGVPDADCSIDTVSCVWNSANWLEREVYDLMGVQFNNHPDLRRILMTDDWVGHPLRKDYPLQGPDREPYKGRLS.

Belongs to the complex I 30 kDa subunit family. As to quaternary structure, NDH-1 is composed of 14 different subunits. Subunits NuoB, C, D, E, F, and G constitute the peripheral sector of the complex.

The protein resides in the cell inner membrane. It catalyses the reaction a quinone + NADH + 5 H(+)(in) = a quinol + NAD(+) + 4 H(+)(out). In terms of biological role, NDH-1 shuttles electrons from NADH, via FMN and iron-sulfur (Fe-S) centers, to quinones in the respiratory chain. The immediate electron acceptor for the enzyme in this species is believed to be ubiquinone. Couples the redox reaction to proton translocation (for every two electrons transferred, four hydrogen ions are translocated across the cytoplasmic membrane), and thus conserves the redox energy in a proton gradient. In Geobacter sulfurreducens (strain ATCC 51573 / DSM 12127 / PCA), this protein is NADH-quinone oxidoreductase subunit C.